A 331-amino-acid polypeptide reads, in one-letter code: Putative ankyrin repeat protein FPV012 (331 aa).

ANK repeat units lie at residues 11–40 (DGYTSLYKETAKGNIKKVVELLYKGVNPNT), 44–73 (DSYTPLHIAAKTGNIKIIRRLIRYGANVDK), 77–106 (DGYTALLIAICTGDIKTCNVLLDEGANPNY), and 110–139 (YGITPLVRIISYYRPTILKLLMDRGANCNQ).

This is Putative ankyrin repeat protein FPV012 from Vertebrata (FPV).